The sequence spans 478 residues: Hexokinase (478 aa).

In terms of domain architecture, Hexokinase spans 21–465 (EYLLKELTEL…LGAGAAIIAA (445 aa)). The interval 75-208 (TGKEMGDYLA…KVPIEVVALI (134 aa)) is hexokinase small subdomain. K111 contacts ATP. Residues 151–177 (PLGFTFSYPASQGSINEGYLQRWTKGF) form a glucose-binding region. Residues 209 to 454 (NDTTGTLVAS…DPIVIVPAED (246 aa)) are hexokinase large subdomain.

This sequence belongs to the hexokinase family. In terms of assembly, monomer.

It catalyses the reaction a D-hexose + ATP = a D-hexose 6-phosphate + ADP + H(+). It carries out the reaction D-fructose + ATP = D-fructose 6-phosphate + ADP + H(+). The enzyme catalyses D-glucose + ATP = D-glucose 6-phosphate + ADP + H(+). The protein operates within carbohydrate metabolism; hexose metabolism. It functions in the pathway carbohydrate degradation; glycolysis; D-glyceraldehyde 3-phosphate and glycerone phosphate from D-glucose: step 1/4. In terms of biological role, catalyzes the phosphorylation of hexose, such as D-glucose and D-fructose, to hexose 6-phosphate (D-glucose 6-phosphate and D-fructose 6-phosphate, respectively). Mediates the initial step of glycolysis by catalyzing phosphorylation of D-glucose to D-glucose 6-phosphate. This Schwanniomyces occidentalis (Yeast) protein is Hexokinase (HXK).